We begin with the raw amino-acid sequence, 637 residues long: Early transcription factor 70 kDa subunit (637 aa).

Residues 32 to 185 (RTIIDENRSV…GHIIDLMSEE (154 aa)) form the Helicase ATP-binding domain. 45 to 52 (HIMGSGKT) contributes to the ATP binding site. A DEXH box motif is present at residues 135 to 138 (DEAH). The Helicase C-terminal domain maps to 327–507 (KFKYFINRIQ…VLPFDIKKLL (181 aa)).

It belongs to the helicase family. VETF subfamily. As to quaternary structure, heterodimer of a 70 kDa and a 82 kDa subunit. Part of the early transcription complex composed of ETF, RAP94/OPG109, and the DNA-directed RNA polymerase.

The protein resides in the virion. Acts with RNA polymerase to initiate transcription from early gene promoters. Is recruited by the RPO-associated protein of 94 kDa RAP94/OPG109 to form the early transcription complex, which also contains the core RNA polymerase. ETF heterodimer binds to early gene promoters. The chain is Early transcription factor 70 kDa subunit (OPG118) from Vaccinia virus (strain Ankara) (VACV).